The following is a 209-amino-acid chain: MTLAKEIARDLLKIKAVYLKPEEPFTWASGIQSPIYTDNRVTLAYPETRTLIEDGFVEKIRAEFPDVEVIAGTATAGIPHGAIIADKMNLPFAYIRSKPKDHGAGNQIEGRVAPGQKMVVIEDLISTGGSVLDAIAAAKREGADVIGAAAIFTYELPKADKNFNDAGVKLVTLSNYTELIHLAEQEGYINAEGLALLKRFKEDQENWHL.

5-phospho-alpha-D-ribose 1-diphosphate-binding positions include R96, K100, H102, and 122–130; that span reads EDLISTGGS. Residue S126 participates in orotate binding.

It belongs to the purine/pyrimidine phosphoribosyltransferase family. PyrE subfamily. As to quaternary structure, homodimer. Mg(2+) is required as a cofactor.

The catalysed reaction is orotidine 5'-phosphate + diphosphate = orotate + 5-phospho-alpha-D-ribose 1-diphosphate. It functions in the pathway pyrimidine metabolism; UMP biosynthesis via de novo pathway; UMP from orotate: step 1/2. Catalyzes the transfer of a ribosyl phosphate group from 5-phosphoribose 1-diphosphate to orotate, leading to the formation of orotidine monophosphate (OMP). The sequence is that of Orotate phosphoribosyltransferase from Streptococcus gordonii (strain Challis / ATCC 35105 / BCRC 15272 / CH1 / DL1 / V288).